A 452-amino-acid polypeptide reads, in one-letter code: Exodeoxyribonuclease 7 large subunit (452 aa).

Belongs to the XseA family. In terms of assembly, heterooligomer composed of large and small subunits.

It localises to the cytoplasm. It carries out the reaction Exonucleolytic cleavage in either 5'- to 3'- or 3'- to 5'-direction to yield nucleoside 5'-phosphates.. Functionally, bidirectionally degrades single-stranded DNA into large acid-insoluble oligonucleotides, which are then degraded further into small acid-soluble oligonucleotides. This chain is Exodeoxyribonuclease 7 large subunit, found in Bacillus cereus (strain ATCC 10987 / NRS 248).